Here is a 236-residue protein sequence, read N- to C-terminus: Small ribosomal subunit protein uS2c (236 aa).

Belongs to the universal ribosomal protein uS2 family.

The protein resides in the plastid. The protein localises to the chloroplast. This Eucalyptus globulus subsp. globulus (Tasmanian blue gum) protein is Small ribosomal subunit protein uS2c (rps2).